The following is a 257-amino-acid chain: 3-deoxy-manno-octulosonate cytidylyltransferase (257 aa).

It belongs to the KdsB family.

The protein resides in the cytoplasm. It carries out the reaction 3-deoxy-alpha-D-manno-oct-2-ulosonate + CTP = CMP-3-deoxy-beta-D-manno-octulosonate + diphosphate. The protein operates within nucleotide-sugar biosynthesis; CMP-3-deoxy-D-manno-octulosonate biosynthesis; CMP-3-deoxy-D-manno-octulosonate from 3-deoxy-D-manno-octulosonate and CTP: step 1/1. It participates in bacterial outer membrane biogenesis; lipopolysaccharide biosynthesis. In terms of biological role, activates KDO (a required 8-carbon sugar) for incorporation into bacterial lipopolysaccharide in Gram-negative bacteria. The chain is 3-deoxy-manno-octulosonate cytidylyltransferase from Albidiferax ferrireducens (strain ATCC BAA-621 / DSM 15236 / T118) (Rhodoferax ferrireducens).